A 350-amino-acid polypeptide reads, in one-letter code: Twinfilin-1 (350 aa).

Position 2 is an N-acetylserine (Ser2). Residues 2 to 139 enclose the ADF-H 1 domain; sequence SHQTGIQASE…SLHGYKKYLL (138 aa). A phosphoserine mark is found at Ser143 and Ser277. The ADF-H 2 domain maps to 177 to 313; that stretch reads GVAFPISQEA…TADFLYEEVH (137 aa). At Tyr309 the chain carries Phosphotyrosine. Residues 316–350 are disordered; the sequence is QHAHKQSFAKPKGPSGKRGIRRIIRGPAETEATTE. At Thr349 the chain carries Phosphothreonine.

The protein belongs to the actin-binding proteins ADF family. Twinfilin subfamily. As to quaternary structure, interacts with G-actin; ADP-actin form and capping protein (CP). May also be able to interact with TWF2 and phosphoinositides, PI(4,5)P2. When bound to PI(4,5)P2, it is down-regulated. Interacts with ACTG1. Phosphorylated on serine and threonine residues.

The protein localises to the cytoplasm. It localises to the cytoskeleton. Actin-binding protein involved in motile and morphological processes. Inhibits actin polymerization, likely by sequestering G-actin. By capping the barbed ends of filaments, it also regulates motility. Seems to play an important role in clathrin-mediated endocytosis and distribution of endocytic organelles. The sequence is that of Twinfilin-1 (TWF1) from Bos taurus (Bovine).